A 145-amino-acid chain; its full sequence is Trafficking protein particle complex subunit 1 (145 aa).

It belongs to the TRAPP small subunits family. BET5 subfamily. In terms of assembly, part of the multisubunit transport protein particle (TRAPP) complex. The heterodimer TRAPPC6B-TRAPPC3 interacts with TRAPPC1 likely providing a core for TRAPP complex formation.

The protein localises to the golgi apparatus. The protein resides in the cis-Golgi network. It is found in the endoplasmic reticulum. In terms of biological role, may play a role in vesicular transport from endoplasmic reticulum to Golgi. The polypeptide is Trafficking protein particle complex subunit 1 (TRAPPC1) (Bos taurus (Bovine)).